A 712-amino-acid polypeptide reads, in one-letter code: Elongation factor G (712 aa).

The region spanning 8 to 290 (TRYRNIGISA…AVIEFLPSPT (283 aa)) is the tr-type G domain. GTP-binding positions include 17 to 24 (AHIDAGKT), 88 to 92 (DTPGH), and 142 to 145 (NKMD).

It belongs to the TRAFAC class translation factor GTPase superfamily. Classic translation factor GTPase family. EF-G/EF-2 subfamily.

It localises to the cytoplasm. In terms of biological role, catalyzes the GTP-dependent ribosomal translocation step during translation elongation. During this step, the ribosome changes from the pre-translocational (PRE) to the post-translocational (POST) state as the newly formed A-site-bound peptidyl-tRNA and P-site-bound deacylated tRNA move to the P and E sites, respectively. Catalyzes the coordinated movement of the two tRNA molecules, the mRNA and conformational changes in the ribosome. This chain is Elongation factor G, found in Acinetobacter baumannii (strain AB0057).